The following is a 327-amino-acid chain: Vacuolar protein sorting-associated protein 26A (327 aa).

The segment at Arg306–Met327 is disordered. Ser315 carries the post-translational modification Phosphoserine. The span at Pro316 to Met327 shows a compositional bias: polar residues.

This sequence belongs to the VPS26 family. In terms of assembly, component of the heterotrimeric retromer cargo-selective complex (CSC), also described as vacuolar protein sorting subcomplex (VPS), formed by VPS26 (VPS26A or VPS26B), VPS29 and VPS35. The CSC has a highly elongated structure with VPS26 and VPS29 binding independently at opposite distal ends of VPS35 as central platform. The CSC is believed to associate with variable sorting nexins to form functionally distinct retromer complex variants. The originally described retromer complex (also called SNX-BAR retromer) is a pentamer containing the CSC and a heterodimeric membrane-deforming subcomplex formed between SNX1 or SNX2 and SNX5 or SNX6 (also called SNX-BAR subcomplex); the respective CSC and SNX-BAR subcomplexes associate with low affinity. The CSC associates with SNX3 to form a SNX3-retromer complex. The CSC associates with SNX27, the WASH complex and the SNX-BAR subcomplex to form the SNX27-retromer complex. Interacts with VPS29, VPS35, SNX27, SNX1, SNX2, SNX5, SNX6, SNX3, RAB7A, ECPAS, EHD1, WASHC5, SORL1.

Its subcellular location is the cytoplasm. It localises to the endosome membrane. The protein localises to the early endosome. Acts as a component of the retromer cargo-selective complex (CSC). The CSC is believed to be the core functional component of retromer or respective retromer complex variants acting to prevent missorting of selected transmembrane cargo proteins into the lysosomal degradation pathway. The recruitment of the CSC to the endosomal membrane involves RAB7A and SNX3. The SNX-BAR retromer mediates retrograde transport of cargo proteins from endosomes to the trans-Golgi network (TGN) and is involved in endosome-to-plasma membrane transport for cargo protein recycling. The SNX3-retromer mediates the retrograde endosome-to-TGN transport of WLS distinct from the SNX-BAR retromer pathway. The SNX27-retromer is believed to be involved in endosome-to-plasma membrane trafficking and recycling of a broad spectrum of cargo proteins. The CSC complex seems to act as recruitment hub for other proteins, such as the WASH complex and TBC1D5. Required for retrograde transport of lysosomal enzyme receptor IGF2R. Required to regulate transcytosis of the polymeric immunoglobulin receptor (pIgR-pIgA). Required for the endosomal localization of WASHC2 (indicative for the WASH complex). Required for the endosomal localization of TBC1D5. Mediates retromer cargo recognition of SORL1 and is involved in trafficking of SORL1 implicated in sorting and processing of APP. Involved in retromer-independent lysosomal sorting of F2R. Involved in recycling of ADRB2. Acts redundantly with VSP26B in SNX-27 mediated endocytic recycling of SLC2A1/GLUT1. Enhances the affinity of SNX27 for PDZ-binding motifs in cargo proteins. This Rattus norvegicus (Rat) protein is Vacuolar protein sorting-associated protein 26A (Vps26a).